The chain runs to 136 residues: Large ribosomal subunit protein uL16 (136 aa).

This sequence belongs to the universal ribosomal protein uL16 family. As to quaternary structure, part of the 50S ribosomal subunit.

Binds 23S rRNA and is also seen to make contacts with the A and possibly P site tRNAs. The sequence is that of Large ribosomal subunit protein uL16 from Shewanella piezotolerans (strain WP3 / JCM 13877).